A 69-amino-acid chain; its full sequence is DNA-directed RNA polymerase subunit omega (69 aa).

The protein belongs to the RNA polymerase subunit omega family. As to quaternary structure, the RNAP catalytic core consists of 2 alpha, 1 beta, 1 beta' and 1 omega subunit. When a sigma factor is associated with the core the holoenzyme is formed, which can initiate transcription.

It catalyses the reaction RNA(n) + a ribonucleoside 5'-triphosphate = RNA(n+1) + diphosphate. Promotes RNA polymerase assembly. Latches the N- and C-terminal regions of the beta' subunit thereby facilitating its interaction with the beta and alpha subunits. The sequence is that of DNA-directed RNA polymerase subunit omega from Heliobacterium modesticaldum (strain ATCC 51547 / Ice1).